The chain runs to 349 residues: MSKPRATYKEAGVDIEAGNSFVQKIKPLVKSTFRPEVMTEIGGFGGLFSLNAAKYKNPVLVSGTDGVGTKLKLAFLADRHDTVGIDLVAMCVNDIVVQGAEPLFFLDYLATGKLDPDKAAQIVAGIAEGCRQAGCALIGGETAEMPGFYADGEYDIAGFTVGVVEKDQIIDGSSITVGNKLIGIGSSGLHSNGYSLARRIIFDRMGLAINSPLPDSTKTVDEELLTPTRIYVRSVMNLLKDFRINGIAHITGGGLLENVPRILPKGCSASFKLGSWDMPSIFTTLQEAGNVEQNEMYRTFNMGIGMVLAVAAADVDDILSRLNGLGEQAWLIGEVKSMSKNQTEQVVLV.

The protein belongs to the AIR synthase family.

It localises to the cytoplasm. The enzyme catalyses 2-formamido-N(1)-(5-O-phospho-beta-D-ribosyl)acetamidine + ATP = 5-amino-1-(5-phospho-beta-D-ribosyl)imidazole + ADP + phosphate + H(+). It participates in purine metabolism; IMP biosynthesis via de novo pathway; 5-amino-1-(5-phospho-D-ribosyl)imidazole from N(2)-formyl-N(1)-(5-phospho-D-ribosyl)glycinamide: step 2/2. The sequence is that of Phosphoribosylformylglycinamidine cyclo-ligase from Trichlorobacter lovleyi (strain ATCC BAA-1151 / DSM 17278 / SZ) (Geobacter lovleyi).